An 86-amino-acid polypeptide reads, in one-letter code: Neuropeptide-like 2 (86 aa).

Positions 1–19 are cleaved as a signal peptide; sequence MAKLAICILVFALFALALS. 2 consecutive propeptides follow at residues 20–34 and 45–86; these read ARVP…QEFL and IEKL…AAST.

In terms of tissue distribution, hemolymph (at protein level).

It localises to the secreted. This is Neuropeptide-like 2 (Nplp2) from Drosophila melanogaster (Fruit fly).